We begin with the raw amino-acid sequence, 154 residues long: Large ribosomal subunit protein uL15 (154 aa).

Residues 1–57 (MRFQDLHPQAGSRRRKRRIGRGIAAGQGASGGFGMRGQKSRSGRPTRPGFEGGQNPL) form a disordered region. The span at 23–35 (IAAGQGASGGFGM) shows a compositional bias: gly residues.

The protein belongs to the universal ribosomal protein uL15 family. Part of the 50S ribosomal subunit.

Functionally, binds to the 23S rRNA. This is Large ribosomal subunit protein uL15 from Thermosynechococcus vestitus (strain NIES-2133 / IAM M-273 / BP-1).